The sequence spans 480 residues: Siroheme synthase 1 (480 aa).

Residues 1-203 (MNYLPIFADL…GQLEQAEGEL (203 aa)) are precorrin-2 dehydrogenase /sirohydrochlorin ferrochelatase. NAD(+) is bound by residues 22-23 (EV) and 43-44 (LA). Residue S128 is modified to Phosphoserine. Residues 222-480 (GEVALVGAGP…DSRPAVVNLA (259 aa)) form a uroporphyrinogen-III C-methyltransferase region. P231 contacts S-adenosyl-L-methionine. The active-site Proton acceptor is the D254. The active-site Proton donor is the K276. S-adenosyl-L-methionine-binding positions include 307–309 (GGD), I312, 337–338 (TA), M389, and G418.

In the N-terminal section; belongs to the precorrin-2 dehydrogenase / sirohydrochlorin ferrochelatase family. It in the C-terminal section; belongs to the precorrin methyltransferase family.

The enzyme catalyses uroporphyrinogen III + 2 S-adenosyl-L-methionine = precorrin-2 + 2 S-adenosyl-L-homocysteine + H(+). It catalyses the reaction precorrin-2 + NAD(+) = sirohydrochlorin + NADH + 2 H(+). The catalysed reaction is siroheme + 2 H(+) = sirohydrochlorin + Fe(2+). The protein operates within cofactor biosynthesis; adenosylcobalamin biosynthesis; precorrin-2 from uroporphyrinogen III: step 1/1. Its pathway is cofactor biosynthesis; adenosylcobalamin biosynthesis; sirohydrochlorin from precorrin-2: step 1/1. It functions in the pathway porphyrin-containing compound metabolism; siroheme biosynthesis; precorrin-2 from uroporphyrinogen III: step 1/1. It participates in porphyrin-containing compound metabolism; siroheme biosynthesis; siroheme from sirohydrochlorin: step 1/1. The protein operates within porphyrin-containing compound metabolism; siroheme biosynthesis; sirohydrochlorin from precorrin-2: step 1/1. Functionally, multifunctional enzyme that catalyzes the SAM-dependent methylations of uroporphyrinogen III at position C-2 and C-7 to form precorrin-2 via precorrin-1. Then it catalyzes the NAD-dependent ring dehydrogenation of precorrin-2 to yield sirohydrochlorin. Finally, it catalyzes the ferrochelation of sirohydrochlorin to yield siroheme. The sequence is that of Siroheme synthase 1 from Pectobacterium atrosepticum (strain SCRI 1043 / ATCC BAA-672) (Erwinia carotovora subsp. atroseptica).